The chain runs to 469 residues: Aspartyl/glutamyl-tRNA(Asn/Gln) amidotransferase subunit B (469 aa).

This sequence belongs to the GatB/GatE family. GatB subfamily. As to quaternary structure, heterotrimer of A, B and C subunits.

It carries out the reaction L-glutamyl-tRNA(Gln) + L-glutamine + ATP + H2O = L-glutaminyl-tRNA(Gln) + L-glutamate + ADP + phosphate + H(+). The enzyme catalyses L-aspartyl-tRNA(Asn) + L-glutamine + ATP + H2O = L-asparaginyl-tRNA(Asn) + L-glutamate + ADP + phosphate + 2 H(+). Its function is as follows. Allows the formation of correctly charged Asn-tRNA(Asn) or Gln-tRNA(Gln) through the transamidation of misacylated Asp-tRNA(Asn) or Glu-tRNA(Gln) in organisms which lack either or both of asparaginyl-tRNA or glutaminyl-tRNA synthetases. The reaction takes place in the presence of glutamine and ATP through an activated phospho-Asp-tRNA(Asn) or phospho-Glu-tRNA(Gln). The sequence is that of Aspartyl/glutamyl-tRNA(Asn/Gln) amidotransferase subunit B from Methanococcus maripaludis (strain C7 / ATCC BAA-1331).